We begin with the raw amino-acid sequence, 426 residues long: Glutamate-1-semialdehyde 2,1-aminomutase (426 aa).

Lys-265 is modified (N6-(pyridoxal phosphate)lysine).

It belongs to the class-III pyridoxal-phosphate-dependent aminotransferase family. HemL subfamily. In terms of assembly, homodimer. It depends on pyridoxal 5'-phosphate as a cofactor.

Its subcellular location is the cytoplasm. The catalysed reaction is (S)-4-amino-5-oxopentanoate = 5-aminolevulinate. It functions in the pathway porphyrin-containing compound metabolism; protoporphyrin-IX biosynthesis; 5-aminolevulinate from L-glutamyl-tRNA(Glu): step 2/2. This Erwinia tasmaniensis (strain DSM 17950 / CFBP 7177 / CIP 109463 / NCPPB 4357 / Et1/99) protein is Glutamate-1-semialdehyde 2,1-aminomutase.